A 366-amino-acid polypeptide reads, in one-letter code: Aminomethyltransferase (366 aa).

It belongs to the GcvT family. In terms of assembly, the glycine cleavage system is composed of four proteins: P, T, L and H.

It carries out the reaction N(6)-[(R)-S(8)-aminomethyldihydrolipoyl]-L-lysyl-[protein] + (6S)-5,6,7,8-tetrahydrofolate = N(6)-[(R)-dihydrolipoyl]-L-lysyl-[protein] + (6R)-5,10-methylene-5,6,7,8-tetrahydrofolate + NH4(+). The glycine cleavage system catalyzes the degradation of glycine. The polypeptide is Aminomethyltransferase (Bacillus cereus (strain B4264)).